We begin with the raw amino-acid sequence, 365 residues long: UDP-N-acetylglucosamine--N-acetylmuramyl-(pentapeptide) pyrophosphoryl-undecaprenol N-acetylglucosamine transferase (365 aa).

Residues 19–21 (TGG), Asn131, Arg170, Ser201, Ile255, 274–279 (ALTVTE), and Gln300 each bind UDP-N-acetyl-alpha-D-glucosamine.

Belongs to the glycosyltransferase 28 family. MurG subfamily.

It is found in the cell inner membrane. It catalyses the reaction di-trans,octa-cis-undecaprenyl diphospho-N-acetyl-alpha-D-muramoyl-L-alanyl-D-glutamyl-meso-2,6-diaminopimeloyl-D-alanyl-D-alanine + UDP-N-acetyl-alpha-D-glucosamine = di-trans,octa-cis-undecaprenyl diphospho-[N-acetyl-alpha-D-glucosaminyl-(1-&gt;4)]-N-acetyl-alpha-D-muramoyl-L-alanyl-D-glutamyl-meso-2,6-diaminopimeloyl-D-alanyl-D-alanine + UDP + H(+). The protein operates within cell wall biogenesis; peptidoglycan biosynthesis. In terms of biological role, cell wall formation. Catalyzes the transfer of a GlcNAc subunit on undecaprenyl-pyrophosphoryl-MurNAc-pentapeptide (lipid intermediate I) to form undecaprenyl-pyrophosphoryl-MurNAc-(pentapeptide)GlcNAc (lipid intermediate II). The sequence is that of UDP-N-acetylglucosamine--N-acetylmuramyl-(pentapeptide) pyrophosphoryl-undecaprenol N-acetylglucosamine transferase from Acinetobacter baylyi (strain ATCC 33305 / BD413 / ADP1).